A 336-amino-acid polypeptide reads, in one-letter code: Anthranilate phosphoribosyltransferase (336 aa).

5-phospho-alpha-D-ribose 1-diphosphate-binding positions include Gly79, 82–83, Thr87, 89–92, 107–115, and Ala119; these read GD, NIST, and KHGNRCVSS. Anthranilate is bound at residue Gly79. Ser91 provides a ligand contact to Mg(2+). Residue Asn110 participates in anthranilate binding. Arg165 provides a ligand contact to anthranilate. Mg(2+) is bound by residues Asp224 and Glu225.

Belongs to the anthranilate phosphoribosyltransferase family. In terms of assembly, homodimer. Requires Mg(2+) as cofactor.

The catalysed reaction is N-(5-phospho-beta-D-ribosyl)anthranilate + diphosphate = 5-phospho-alpha-D-ribose 1-diphosphate + anthranilate. The protein operates within amino-acid biosynthesis; L-tryptophan biosynthesis; L-tryptophan from chorismate: step 2/5. Its function is as follows. Catalyzes the transfer of the phosphoribosyl group of 5-phosphorylribose-1-pyrophosphate (PRPP) to anthranilate to yield N-(5'-phosphoribosyl)-anthranilate (PRA). This Lachnoclostridium phytofermentans (strain ATCC 700394 / DSM 18823 / ISDg) (Clostridium phytofermentans) protein is Anthranilate phosphoribosyltransferase.